We begin with the raw amino-acid sequence, 503 residues long: MLDLTYDTPKPRVIAGAKQDWELVIGMEVHAQVSTRAKLFSGASTRFGAEPNSNVAFVDAGMPGMLPVINEACVSQAVRTGLGLKAQINLESAFDRKNYFYPDLPQGYQISQLYHPIVGEGEVLVELGDGLARLVRIERIHLEQDAGKSIHDMDPALSFVDLNRTGVALMEIVSKPDIRSPEEAAAYVVKLRQIMLYLGTCDGNMQNGNLRADVNVSICAPGQYEKYQATQDFSHLGTRCEIKNMNSMRFIQQAIEVEAKRQIAIIEGGGTVDQETRLYDPDKGETRSMRSKEEAHDYRYFPDPDLLPLTFDQAYVDAIAADLPELPDAKKARFIRGFGLSDYDASVLTADIDAAQYFEATATKDTGKLSANWVINELFGRLKKDERQIEDSPVAPAQLASLIALIASDTISGKIAKDVFEISYTTGRDPSEIVETEGLKQVTDTGAIEAAVDQIIADNPAQVAKAQENPKLAGWFVGQVMKATGGKANPKAVNQIVAQKLGG.

The protein belongs to the GatB/GatE family. GatB subfamily. As to quaternary structure, heterotrimer of A, B and C subunits.

It carries out the reaction L-glutamyl-tRNA(Gln) + L-glutamine + ATP + H2O = L-glutaminyl-tRNA(Gln) + L-glutamate + ADP + phosphate + H(+). It catalyses the reaction L-aspartyl-tRNA(Asn) + L-glutamine + ATP + H2O = L-asparaginyl-tRNA(Asn) + L-glutamate + ADP + phosphate + 2 H(+). In terms of biological role, allows the formation of correctly charged Asn-tRNA(Asn) or Gln-tRNA(Gln) through the transamidation of misacylated Asp-tRNA(Asn) or Glu-tRNA(Gln) in organisms which lack either or both of asparaginyl-tRNA or glutaminyl-tRNA synthetases. The reaction takes place in the presence of glutamine and ATP through an activated phospho-Asp-tRNA(Asn) or phospho-Glu-tRNA(Gln). This Jannaschia sp. (strain CCS1) protein is Aspartyl/glutamyl-tRNA(Asn/Gln) amidotransferase subunit B.